The chain runs to 216 residues: uncharacterized protein (216 aa).

The HTH cro/C1-type domain occupies 8–63; that stretch reads LKTLMTSVHINASELARRTGIAQPIIHRLSTGQNTNPKLATIKPIARYFMVNISQL. The segment at residues 19–38 is a DNA-binding region (H-T-H motif); the sequence is ASELARRTGIAQPIIHRLST.

This is an uncharacterized protein from Coxiella burnetii (strain RSA 493 / Nine Mile phase I).